Here is a 543-residue protein sequence, read N- to C-terminus: 2,3-bisphosphoglycerate-independent phosphoglycerate mutase (543 aa).

Residues Asp-24 and Ser-74 each coordinate Mn(2+). The active-site Phosphoserine intermediate is Ser-74. Substrate is bound by residues His-135, 165-166 (RD), Arg-197, Arg-203, 268-271 (RPDR), and Lys-341. Mn(2+) is bound by residues Asp-408, His-412, Asp-449, His-450, and His-467.

The protein belongs to the BPG-independent phosphoglycerate mutase family. In terms of assembly, monomer. Requires Mn(2+) as cofactor.

The catalysed reaction is (2R)-2-phosphoglycerate = (2R)-3-phosphoglycerate. It participates in carbohydrate degradation; glycolysis; pyruvate from D-glyceraldehyde 3-phosphate: step 3/5. Its function is as follows. Catalyzes the interconversion of 2-phosphoglycerate and 3-phosphoglycerate. The protein is 2,3-bisphosphoglycerate-independent phosphoglycerate mutase of Parasynechococcus marenigrum (strain WH8102).